Reading from the N-terminus, the 317-residue chain is MYKLLVALHLILCTVSHVKTRQRWTALTPEETLFIYTRCQEEHLPADNNSRKTYIENWHQWKLQPNDHVTQCYTKCVLEGLELYDGKQKKFRPGRVSSQHVAYQFLNGATADEVAKYKGAIDALEPASDSCEDLYMAYFPVHETFVNVTRKLYHGTVEGAARVYNSDPNLKRKNESLFTYCEKHVYGDQNREDMCRGRRYELTGSDELRNMIECVFRGLRYIKHGDINIDEIVRDFDHINRGDLEPRVRTILSDCRGIQPYDYYSCLINSDIREEFKLAFDYRDVRSADYAYIVKGNTYDAQKVIAEMNKVEKHVCG.

The first 20 residues, 1–20 (MYKLLVALHLILCTVSHVKT), serve as a signal peptide directing secretion. 5 disulfides stabilise this stretch: C39–C76, C72–C131, C181–C214, C195–C316, and C255–C266. W58 and Y73 together coordinate thromboxane A2. The serotonin site is built by E182, Y264, D281, D284, and M308.

This sequence belongs to the PBP/GOBP family. Female salivary gland.

The protein localises to the secreted. Its function is as follows. Modulates blood feeding of female mosquitoes on vertebrate species by binding and sequestering different mediators involved in the host response, such as biogenic amines and eicosanoids. Binds serotonin with high affinity. Binds tryptamine, octopamine, dopamine and noradrenaline with low affinity. Binds leukotriene C4, leukotriene D4, leukotriene E4 and U-46619, a stable analog of thromboxane A2. Does not bind leukotriene B4, adrenaline, histamine and ADP. Inhibits platelet aggregation induced by low concentrations of collagen and arachidonic acid but not by ADP or adrenaline. In Anopheles darlingi (Mosquito), this protein is Long form salivary protein D7L2.